A 64-amino-acid chain; its full sequence is Large ribosomal subunit protein bL35 (64 aa).

It belongs to the bacterial ribosomal protein bL35 family.

In Coxiella burnetii (strain RSA 493 / Nine Mile phase I), this protein is Large ribosomal subunit protein bL35.